Reading from the N-terminus, the 483-residue chain is Regulatory protein ViaA (483 aa).

The protein belongs to the ViaA family. Homodimer. Interacts with RavA.

It localises to the cytoplasm. Functionally, component of the RavA-ViaA chaperone complex, which may act on the membrane to optimize the function of some of the respiratory chains. ViaA stimulates the ATPase activity of RavA. This chain is Regulatory protein ViaA, found in Salmonella heidelberg (strain SL476).